The primary structure comprises 357 residues: Poly(3-hydroxyalkanoate) polymerase subunit PhaE (357 aa).

A disordered region spans residues 320-357; sequence AALAGEEPATKPATALRSPAPAAKAPARRRTTKTNPAD. Residues 331-344 show a composition bias toward low complexity; the sequence is PATALRSPAPAAKA.

It belongs to the PHA/PHB synthase family. Type III PhaE subfamily. As to quaternary structure, a large complex of PhaC and PhaE; the ratio of the subunits has been estimated to be from 1:1 to 4:1, with more PhaE than PhaC.

The protein resides in the cytoplasm. The protein operates within biopolymer metabolism; poly-(R)-3-hydroxybutanoate biosynthesis. Its function is as follows. Polymerizes D(-)-3-hydroxybutyryl-CoA to create polyhydroxybutyrate (PHB) which consists of thousands of hydroxybutyrate molecules linked end to end. This subunit has no catalytic activity but enhances the activity of PhaC, the catalytic subunit, 100-fold. This chain is Poly(3-hydroxyalkanoate) polymerase subunit PhaE, found in Allochromatium vinosum (strain ATCC 17899 / DSM 180 / NBRC 103801 / NCIMB 10441 / D) (Chromatium vinosum).